A 451-amino-acid polypeptide reads, in one-letter code: Cobyrinate a,c-diamide synthase (451 aa).

In terms of domain architecture, GATase cobBQ-type spans 246–437 (KIGVAYDEVF…VHTHVAAMPN (192 aa)). Cysteine 328 serves as the catalytic Nucleophile.

It belongs to the CobB/CbiA family. The cofactor is Mg(2+).

It carries out the reaction cob(II)yrinate + 2 L-glutamine + 2 ATP + 2 H2O = cob(II)yrinate a,c diamide + 2 L-glutamate + 2 ADP + 2 phosphate + 2 H(+). The catalysed reaction is Ni-sirohydrochlorin + 2 L-glutamine + 2 ATP + 2 H2O = Ni-sirohydrochlorin a,c-diamide + 2 L-glutamate + 2 ADP + 2 phosphate + 2 H(+). Its pathway is cofactor biosynthesis; adenosylcobalamin biosynthesis; cob(II)yrinate a,c-diamide from sirohydrochlorin (anaerobic route): step 10/10. In terms of biological role, catalyzes the ATP-dependent amidation of the two carboxylate groups at positions a and c of cobyrinate, using either L-glutamine or ammonia as the nitrogen source. Involved in the biosynthesis of the unique nickel-containing tetrapyrrole coenzyme F430, the prosthetic group of methyl-coenzyme M reductase (MCR), which plays a key role in methanogenesis and anaerobic methane oxidation. Catalyzes the ATP-dependent amidation of the two carboxylate groups at positions a and c of Ni-sirohydrochlorin, using L-glutamine or ammonia as the nitrogen source. The sequence is that of Cobyrinate a,c-diamide synthase from Methanobrevibacter smithii (strain ATCC 35061 / DSM 861 / OCM 144 / PS).